Consider the following 170-residue polypeptide: Adenine phosphoribosyltransferase (170 aa).

This sequence belongs to the purine/pyrimidine phosphoribosyltransferase family. In terms of assembly, homodimer.

It localises to the cytoplasm. The enzyme catalyses AMP + diphosphate = 5-phospho-alpha-D-ribose 1-diphosphate + adenine. It participates in purine metabolism; AMP biosynthesis via salvage pathway; AMP from adenine: step 1/1. Functionally, catalyzes a salvage reaction resulting in the formation of AMP, that is energically less costly than de novo synthesis. This Oceanobacillus iheyensis (strain DSM 14371 / CIP 107618 / JCM 11309 / KCTC 3954 / HTE831) protein is Adenine phosphoribosyltransferase.